We begin with the raw amino-acid sequence, 143 residues long: Transcriptional regulator MraZ (143 aa).

SpoVT-AbrB domains lie at 5 to 47 (EYRH…PQSE) and 76 to 119 (ASEC…SKTL).

Belongs to the MraZ family. In terms of assembly, forms oligomers.

The protein localises to the cytoplasm. It is found in the nucleoid. The protein is Transcriptional regulator MraZ of Shouchella clausii (strain KSM-K16) (Alkalihalobacillus clausii).